The sequence spans 384 residues: Putative glutamate--cysteine ligase 2-1 (384 aa).

It belongs to the glutamate--cysteine ligase type 2 family. YbdK subfamily.

The enzyme catalyses L-cysteine + L-glutamate + ATP = gamma-L-glutamyl-L-cysteine + ADP + phosphate + H(+). Its function is as follows. ATP-dependent carboxylate-amine ligase which exhibits weak glutamate--cysteine ligase activity. This Paenarthrobacter aurescens (strain TC1) protein is Putative glutamate--cysteine ligase 2-1.